A 174-amino-acid chain; its full sequence is Bifunctional protein PyrR (174 aa).

The PRPP-binding motif lies at 97 to 109; it reads VVIVDDVLYTGRT.

This sequence belongs to the purine/pyrimidine phosphoribosyltransferase family. PyrR subfamily. In terms of assembly, homodimer and homohexamer; in equilibrium.

It carries out the reaction UMP + diphosphate = 5-phospho-alpha-D-ribose 1-diphosphate + uracil. In terms of biological role, regulates transcriptional attenuation of the pyrimidine nucleotide (pyr) operon by binding in a uridine-dependent manner to specific sites on pyr mRNA. This disrupts an antiterminator hairpin in the RNA and favors formation of a downstream transcription terminator, leading to a reduced expression of downstream genes. Functionally, also displays a weak uracil phosphoribosyltransferase activity which is not physiologically significant. This chain is Bifunctional protein PyrR, found in Macrococcus caseolyticus (strain JCSC5402) (Macrococcoides caseolyticum).